Here is a 3598-residue protein sequence, read N- to C-terminus: Dystrophin, isoforms A/C/F/G/H (3598 aa).

Positions 1-230 are actin-binding; sequence MEPGILIDER…YVMCLYHAME (230 aa). 2 consecutive Calponin-homology (CH) domains span residues 12–116 and 127–230; these read HIQK…LEFN and NGVE…HAME. The disordered stretch occupies residues 233–297; that stretch reads RTRQQEQEQD…SGELKTHSMR (65 aa). Over residues 267-286 the composition is skewed to polar residues; sequence NDQTSLGLYTSDSAGSMEQR. 6 Spectrin repeats span residues 307–420, 423–525, 851–963, 1056–1170, 1173–1275, and 1381–1483; these read VEIS…KILM, AEFQ…KLQQ, QDFG…AIEN, SHID…LLEH, TQLG…LLEQ, and SYES…TLER. 5 disordered regions span residues 1633–1696, 1716–1742, 1799–1854, 1878–1941, and 2204–2233; these read ARNT…VMPD, SLNP…SSPA, EDSD…ENTS, RDIL…EPLV, and GPRI…NEPS. A compositionally biased stretch (low complexity) spans 1663-1679; that stretch reads SGESPSSAHTSSSESPT. Residues 1803–1816 show a composition bias toward basic and acidic residues; sequence SSVRVDSQGKEMRR. Phosphoserine is present on residues Ser1832 and Ser1838. A compositionally biased stretch (acidic residues) spans 1834–1843; that stretch reads NDEDSAEQEE. Residues 1878–1893 show a composition bias toward basic and acidic residues; the sequence is RDILRDSEEEEPKTPD. The segment covering 2218 to 2233 has biased composition (polar residues); sequence SAATMSCRSEYNNEPS. Spectrin repeat units follow at residues 2237–2363, 2366–2472, 2475–2576, 2579–2712, and 2715–2819; these read ALAG…QLKN, SDSQ…QLHA, HSLQ…RLES, EHWN…RLDE, and TKMR…VLCQ. The disordered stretch occupies residues 2655 to 2679; that stretch reads VSDTSDTEANHDSDSRYMSAEEQSR. The segment at 2822 to 2852 is disordered; sequence AQQTHENGDDGRTTSNSGTIGPLPNLGQSVK. Residues 2849–2882 enclose the WW domain; that stretch reads QSVKPPWERATTAANVPYYIDHERETTHWDHPEM. The ZZ-type zinc-finger motif lies at 3107–3163; the sequence is KHQAKCNICKEYPIVGFRYRCLKCFNFDMCQKCFFFGRNAKNHKLTHPMHEYCTTTT. Residues Cys3112, Cys3115, Cys3127, Cys3130, Cys3136, Cys3139, His3149, and His3153 each coordinate Zn(2+). Ser3207 bears the Phosphoserine mark. 4 disordered regions span residues 3316 to 3344, 3387 to 3449, 3483 to 3545, and 3560 to 3598; these read EQSG…GEQG, DEPN…KGIM, LHQQ…QQHL, and ELES…ELQK. 2 stretches are compositionally biased toward polar residues: residues 3325–3337 and 3408–3439; these read NGMQ…MTGL and ALNS…QQNG. Residues 3485 to 3499 show a composition bias toward low complexity; that stretch reads QQQQQQLQQQPPQQQ. Residues 3505-3523 show a composition bias toward gly residues; sequence GNGGMDISGGMQTSGGYLG. Residues 3534–3545 show a composition bias toward low complexity; it reads SSLMQQQHQQHL. Positions 3560 to 3570 are enriched in acidic residues; it reads ELESINDDLED. Positions 3571-3589 are enriched in low complexity; sequence SSSSNTTNTTTTTTTTATT.

In terms of assembly, component of the dystrophin associated protein complex (DAPC). Interacts with Dg, via the Dg WW domain binding sites. In terms of tissue distribution, isoform A, isoform F and isoform G are expressed in the midgut endoderm of stage 12 embryos. In stage 16 embryos, expression is also seen in the pericardial cells, cells at the ectoderm segmental border and cells along the midline of the CNS. During embryogenesis, isoform A is also expressed in the visceral mesoderm, muscle attachment sites, mesectodermal cells at the midline, the gut, and throughout muscle fibers. In larvae, isoform A is found in all muscle fibers, but not detectable in the brain or neuropil.

It localises to the cell membrane. The protein resides in the sarcolemma. It is found in the cytoplasm. The protein localises to the cytoskeleton. Functionally, required for the maintenance of appropriate synaptic retrograde communication and the stabilization of muscle cell architecture or physiology. Both det and Dg are required for maintenance of early dpp signaling in the presumptive crossvein. Isoform A is not required to maintain muscle integrity, but plays a role in neuromuscular homeostasis by regulating neurotransmitter release. May play a role in anchoring the cytoskeleton to the plasma membrane. In Drosophila melanogaster (Fruit fly), this protein is Dystrophin, isoforms A/C/F/G/H (Dys).